Here is a 213-residue protein sequence, read N- to C-terminus: Putative thiamine-phosphate synthase (213 aa).

4-amino-2-methyl-5-(diphosphooxymethyl)pyrimidine is bound by residues 38 to 42 (QLREK) and Asn70. Asp71 contacts Mg(2+). Ser109 lines the 4-amino-2-methyl-5-(diphosphooxymethyl)pyrimidine pocket. 135–137 (TPS) is a binding site for 2-[(2R,5Z)-2-carboxy-4-methylthiazol-5(2H)-ylidene]ethyl phosphate. Lys138 contributes to the 4-amino-2-methyl-5-(diphosphooxymethyl)pyrimidine binding site. 2-[(2R,5Z)-2-carboxy-4-methylthiazol-5(2H)-ylidene]ethyl phosphate contacts are provided by residues Gly166 and 186–187 (IS).

This sequence belongs to the thiamine-phosphate synthase family. The cofactor is Mg(2+).

The catalysed reaction is 2-[(2R,5Z)-2-carboxy-4-methylthiazol-5(2H)-ylidene]ethyl phosphate + 4-amino-2-methyl-5-(diphosphooxymethyl)pyrimidine + 2 H(+) = thiamine phosphate + CO2 + diphosphate. It carries out the reaction 2-(2-carboxy-4-methylthiazol-5-yl)ethyl phosphate + 4-amino-2-methyl-5-(diphosphooxymethyl)pyrimidine + 2 H(+) = thiamine phosphate + CO2 + diphosphate. It catalyses the reaction 4-methyl-5-(2-phosphooxyethyl)-thiazole + 4-amino-2-methyl-5-(diphosphooxymethyl)pyrimidine + H(+) = thiamine phosphate + diphosphate. Its pathway is cofactor biosynthesis; thiamine diphosphate biosynthesis; thiamine phosphate from 4-amino-2-methyl-5-diphosphomethylpyrimidine and 4-methyl-5-(2-phosphoethyl)-thiazole: step 1/1. In terms of biological role, condenses 4-methyl-5-(beta-hydroxyethyl)thiazole monophosphate (THZ-P) and 2-methyl-4-amino-5-hydroxymethyl pyrimidine pyrophosphate (HMP-PP) to form thiamine monophosphate (TMP). This is Putative thiamine-phosphate synthase (thiE) from Geobacter sulfurreducens (strain ATCC 51573 / DSM 12127 / PCA).